The following is a 626-amino-acid chain: Phosphomethylpyrimidine synthase (626 aa).

Substrate contacts are provided by residues Asn237, Met266, Tyr295, His331, 351-353 (SRG), 392-395 (DGLR), and Glu431. Zn(2+) is bound at residue His435. Substrate is bound at residue Tyr458. Residue His499 coordinates Zn(2+). Cys579, Cys582, and Cys587 together coordinate [4Fe-4S] cluster.

It belongs to the ThiC family. As to quaternary structure, homodimer. [4Fe-4S] cluster serves as cofactor.

The enzyme catalyses 5-amino-1-(5-phospho-beta-D-ribosyl)imidazole + S-adenosyl-L-methionine = 4-amino-2-methyl-5-(phosphooxymethyl)pyrimidine + CO + 5'-deoxyadenosine + formate + L-methionine + 3 H(+). It functions in the pathway cofactor biosynthesis; thiamine diphosphate biosynthesis. Functionally, catalyzes the synthesis of the hydroxymethylpyrimidine phosphate (HMP-P) moiety of thiamine from aminoimidazole ribotide (AIR) in a radical S-adenosyl-L-methionine (SAM)-dependent reaction. The protein is Phosphomethylpyrimidine synthase of Cupriavidus necator (strain ATCC 17699 / DSM 428 / KCTC 22496 / NCIMB 10442 / H16 / Stanier 337) (Ralstonia eutropha).